The sequence spans 669 residues: Zeaxanthin epoxidase, chloroplastic (669 aa).

A chloroplast-targeting transit peptide spans 1–49 (MYSTVFYTSVHPSTSVLSRKQLPLLISKDFSAELYHSLPCRSLENGHIN). FAD-binding positions include 87–115 (KVLVAGGGIGGLVFALAAKKRGFDVLVFE) and 365–378 (TFSWGRGRVTLLGD). The region spanning 553 to 617 (IVLSRDEDVP…HGTWVTDNEG (65 aa)) is the FHA domain.

FAD is required as a cofactor.

The protein resides in the plastid. It localises to the chloroplast. It carries out the reaction all-trans-zeaxanthin + 4 reduced [2Fe-2S]-[ferredoxin] + 2 O2 + 4 H(+) = all-trans-violaxanthin + 4 oxidized [2Fe-2S]-[ferredoxin] + 2 H2O. Its pathway is plant hormone biosynthesis; abscisate biosynthesis. Converts zeaxanthin into antheraxanthin and subsequently violaxanthin. Involved in the epoxidation of zeaxanthin. Plays an important role in resistance to stresses, seed development and dormancy. This is Zeaxanthin epoxidase, chloroplastic from Solanum lycopersicum (Tomato).